We begin with the raw amino-acid sequence, 208 residues long: Methylthioribulose-1-phosphate dehydratase (208 aa).

Residues His98 and His100 each coordinate Zn(2+).

Belongs to the aldolase class II family. MtnB subfamily. Zn(2+) is required as a cofactor.

It catalyses the reaction 5-(methylsulfanyl)-D-ribulose 1-phosphate = 5-methylsulfanyl-2,3-dioxopentyl phosphate + H2O. It functions in the pathway amino-acid biosynthesis; L-methionine biosynthesis via salvage pathway; L-methionine from S-methyl-5-thio-alpha-D-ribose 1-phosphate: step 2/6. Functionally, catalyzes the dehydration of methylthioribulose-1-phosphate (MTRu-1-P) into 2,3-diketo-5-methylthiopentyl-1-phosphate (DK-MTP-1-P). The polypeptide is Methylthioribulose-1-phosphate dehydratase (Marinobacter nauticus (strain ATCC 700491 / DSM 11845 / VT8) (Marinobacter aquaeolei)).